A 231-amino-acid chain; its full sequence is Large ribosomal subunit protein uL3 (231 aa).

The residue at position 151 (Gln-151) is an N5-methylglutamine.

Belongs to the universal ribosomal protein uL3 family. In terms of assembly, part of the 50S ribosomal subunit. Forms a cluster with proteins L14 and L19. Post-translationally, methylated by PrmB.

Its function is as follows. One of the primary rRNA binding proteins, it binds directly near the 3'-end of the 23S rRNA, where it nucleates assembly of the 50S subunit. The protein is Large ribosomal subunit protein uL3 of Granulibacter bethesdensis (strain ATCC BAA-1260 / CGDNIH1).